A 113-amino-acid chain; its full sequence is uncharacterized protein (113 aa).

Over residues 1–19 the composition is skewed to basic and acidic residues; sequence MDKKSAHRNPEDAKAGKYE. The tract at residues 1-94 is disordered; it reads MDKKSAHRNP…NKWRGKRKVS (94 aa). The span at 20–41 shows a compositional bias: basic residues; the sequence is GKHKRKKKRKQNQNQHRSRHRS. The segment covering 52-66 has biased composition (low complexity); that stretch reads FPSSSSSSSGSQTDS. Residues 75–92 are compositionally biased toward basic residues; that stretch reads KIKKKRREKTNKWRGKRK.

This is an uncharacterized protein from Macaca fascicularis (Crab-eating macaque).